The following is a 172-amino-acid chain: Translation initiation factor IF-3 (172 aa).

The protein belongs to the IF-3 family. As to quaternary structure, monomer.

It localises to the cytoplasm. Functionally, IF-3 binds to the 30S ribosomal subunit and shifts the equilibrium between 70S ribosomes and their 50S and 30S subunits in favor of the free subunits, thus enhancing the availability of 30S subunits on which protein synthesis initiation begins. This chain is Translation initiation factor IF-3, found in Haemophilus influenzae (strain ATCC 51907 / DSM 11121 / KW20 / Rd).